A 165-amino-acid polypeptide reads, in one-letter code: V-type proton ATPase 16 kDa proteolipid subunit (165 aa).

Residues 1-10 are Lumenal-facing; sequence MSSVFSGDET. The helical transmembrane segment at 11-33 threads the bilayer; that stretch reads APFFGFLGAASALIFSCMGAAYG. Residues 34–55 lie on the Cytoplasmic side of the membrane; that stretch reads TAKSGVGVASMGVMRPELVMKS. The chain crosses the membrane as a helical span at residues 56–76; the sequence is IVPVVMAGVLGIYGLIIAVII. At 77–95 the chain is on the lumenal side; sequence STGINPKAKPYYLFDGYAH. Residues 96–117 form a helical membrane-spanning segment; that stretch reads LSSGLACGLAGLAAGMAIGIVG. The Cytoplasmic portion of the chain corresponds to 118 to 129; the sequence is DAGVRANAQQPK. Residues 130–155 traverse the membrane as a helical segment; that stretch reads LFVGMILILIFAEALALYGLIVGIIL. Residues 156–165 are Lumenal-facing; sequence SSRAGQSRAD.

It belongs to the V-ATPase proteolipid subunit family. In terms of assembly, V-ATPase is a heteromultimeric enzyme composed of a peripheral catalytic V1 complex (main components: subunits A, B, C, D, E, and F) attached to an integral membrane V0 proton pore complex (main component: the proteolipid protein; which is present as a hexamer that forms the proton-conducting pore).

Its subcellular location is the vacuole membrane. Its function is as follows. Proton-conducting pore forming subunit of the membrane integral V0 complex of vacuolar ATPase. V-ATPase is responsible for acidifying a variety of intracellular compartments in eukaryotic cells. This Oryza sativa subsp. indica (Rice) protein is V-type proton ATPase 16 kDa proteolipid subunit (VATP-P1).